Here is a 973-residue protein sequence, read N- to C-terminus: MSELKTISIRGAREHNLKGIDLDLPRNKLIVMTGLSGSGKSSLAFDTIYAEGQRRYVESLSAYARQFLEMMQKPDVDQIDGLSPAISIEQKTTSRNPRSTVGTVTEIYDYLRLLFARVGVPYSPATGLPIESQTVSQMVDRVLEFGEGTRLYMLAPLVRGRKGEYRKELAELMKKGFQRVKVDGQFYEIADVPALDKKYKHDIDVVVDRVVVRPDIGTRLADSIETCLTLADGLAIAEFADRPLPPEETSAGGSANKSLNETHERVLFSEKFACPVSGFTIPEIEPRLFSFNNPFGACTTCDGLGSQQKIDEALIVPEPNRTLRDGAIAPWAKSTSPYYNQTLEALGTVFGFKLGSRWSELSEEAQEAILHGTKDKITFHYQDGARSYNTTKTFEGIVPNLERRWKETDSAWAREEIERYMSAAPCPACAGYRLKPEALAVKIHALHIGEVSEMSIRAARDWFEVLPEHLSTKQNEIAVRILKEIRERLRFLNDVGLEYLSLSRNSGTLSGGESQRIRLASQIGSGLTGVLYVLDEPSIGLHQRDNARLLDTLRHLRDIGNTVIVVEHDEDAILTADYVVDIGPAAGIHGGEVIAEGTPSDIMSNPKSLTGKYLSGELSVAVPGERRKPKKKKEVTVVGARANNLKNVTASIPLGVFTAVTGVSGGGKSTFLIETLYKAAARRVMGARENPAEHDRIDGFEHIDKVIDIDQSPIGRTPRSNPATYTGAFTPIRDWFAGLPEAKARGYQPGRFSFNVKGGRCEACQGDGVIKIEMHFLPDVYVTCDVCHGKRYNRETLDVHFKGKSIADVLDMTVEEGVEFFAAVPAVRDKLVTLNQVGLGYIKIGQQANTLSGGEAQRVKLAKELSKRSTGRTLYILDEPTTGLHFHDVAKLLEVLHELVNQGNSVVVIEHNLEVIKTADWIIDFGPEGGDGGGEVIAQGTPEEVVKEPRSYTGQFLKELLERRPVKKVVAAE.

34–41 (GLSGSGKS) contacts ATP. 2 ABC transporter domains span residues 331–609 (WAKS…PKSL) and 629–958 (PKKK…QFLK). 662-669 (GVSGGGKS) provides a ligand contact to ATP. The segment at 761–787 (CEACQGDGVIKIEMHFLPDVYVTCDVC) adopts a C4-type zinc-finger fold.

It belongs to the ABC transporter superfamily. UvrA family. Forms a heterotetramer with UvrB during the search for lesions.

The protein resides in the cytoplasm. Its function is as follows. The UvrABC repair system catalyzes the recognition and processing of DNA lesions. UvrA is an ATPase and a DNA-binding protein. A damage recognition complex composed of 2 UvrA and 2 UvrB subunits scans DNA for abnormalities. When the presence of a lesion has been verified by UvrB, the UvrA molecules dissociate. This is UvrABC system protein A from Rhizobium meliloti (strain 1021) (Ensifer meliloti).